A 446-amino-acid chain; its full sequence is Casein kinase I homolog 1 (446 aa).

One can recognise a Protein kinase domain in the interval Y12 to L274. ATP contacts are provided by residues I18–I26 and K41. The active-site Proton acceptor is D131. Residues K308–S430 are disordered. S329 is subject to Phosphoserine. The span at P332–S345 shows a compositional bias: polar residues. Over residues K346–A355 the composition is skewed to basic and acidic residues. Over residues N360 to P397 the composition is skewed to polar residues. A compositionally biased stretch (basic and acidic residues) spans D401–R412.

It belongs to the protein kinase superfamily. CK1 Ser/Thr protein kinase family. Casein kinase I subfamily.

It localises to the cytoplasm. The enzyme catalyses L-seryl-[protein] + ATP = O-phospho-L-seryl-[protein] + ADP + H(+). It catalyses the reaction L-threonyl-[protein] + ATP = O-phospho-L-threonyl-[protein] + ADP + H(+). Its function is as follows. Casein kinases are operationally defined by their preferential utilization of acidic proteins such as caseins as substrates. This Schizosaccharomyces pombe (strain 972 / ATCC 24843) (Fission yeast) protein is Casein kinase I homolog 1 (cki1).